Reading from the N-terminus, the 489-residue chain is Serine/threonine-protein kinase BSK3 (489 aa).

Gly2 carries N-myristoyl glycine lipidation. In terms of domain architecture, Protein kinase spans 58–324 (EYIVSEHGEK…ETEVLSHVLM (267 aa)). ATP-binding positions include 64–72 (HGEKAPNVV) and Lys86. Residue Asp180 is the Proton acceptor of the active site. Residue Ser212 is modified to Phosphoserine.

The protein belongs to the protein kinase superfamily. Ser/Thr protein kinase family. In terms of assembly, interacts with BRI1. In terms of processing, phosphorylated by BRI1 upon brassinolide (BL) treatment. Phosphorylated by ASK7/BIN2 and ASK9/BIL2.

It localises to the cell membrane. It catalyses the reaction L-seryl-[protein] + ATP = O-phospho-L-seryl-[protein] + ADP + H(+). It carries out the reaction L-threonyl-[protein] + ATP = O-phospho-L-threonyl-[protein] + ADP + H(+). Functionally, probable serine/threonine kinase that acts as a positive regulator of brassinosteroid (BR) signaling downstream of the receptor kinase BRI1. Mediates signal transduction from BRI1 by functioning as substrate of BRI1. Functions redundantly with BSK4, BSK6, BSK7 and BSK8. This chain is Serine/threonine-protein kinase BSK3, found in Arabidopsis thaliana (Mouse-ear cress).